We begin with the raw amino-acid sequence, 402 residues long: Tyrosine--tRNA ligase (402 aa).

Positions Pro47–His56 match the 'HIGH' region motif. The 'KMSKS' region motif lies at Lys232–Ser236. Residue Lys235 coordinates ATP. Residues Val341–Ile401 enclose the S4 RNA-binding domain.

Belongs to the class-I aminoacyl-tRNA synthetase family. TyrS type 2 subfamily. In terms of assembly, homodimer.

It localises to the cytoplasm. It carries out the reaction tRNA(Tyr) + L-tyrosine + ATP = L-tyrosyl-tRNA(Tyr) + AMP + diphosphate + H(+). Its function is as follows. Catalyzes the attachment of tyrosine to tRNA(Tyr) in a two-step reaction: tyrosine is first activated by ATP to form Tyr-AMP and then transferred to the acceptor end of tRNA(Tyr). The sequence is that of Tyrosine--tRNA ligase from Helicobacter pylori (strain ATCC 700392 / 26695) (Campylobacter pylori).